Reading from the N-terminus, the 208-residue chain is Sec-independent protein translocase protein TatB (208 aa).

The chain crosses the membrane as a helical span at residues 1–21; sequence MFDIGVGELTLIAVVALVVLG. Residues 188 to 208 are disordered; it reads DAGTPAASMPSAPAKIQEKQP.

This sequence belongs to the TatB family. The Tat system comprises two distinct complexes: a TatABC complex, containing multiple copies of TatA, TatB and TatC subunits, and a separate TatA complex, containing only TatA subunits. Substrates initially bind to the TatABC complex, which probably triggers association of the separate TatA complex to form the active translocon.

The protein localises to the cell inner membrane. Functionally, part of the twin-arginine translocation (Tat) system that transports large folded proteins containing a characteristic twin-arginine motif in their signal peptide across membranes. Together with TatC, TatB is part of a receptor directly interacting with Tat signal peptides. TatB may form an oligomeric binding site that transiently accommodates folded Tat precursor proteins before their translocation. The chain is Sec-independent protein translocase protein TatB from Xanthomonas axonopodis pv. citri (strain 306).